The following is a 168-amino-acid chain: Disulfide bond formation protein B 1 (168 aa).

Residues 1–14 (MNELTSRLNRERRF) lie on the Cytoplasmic side of the membrane. A helical membrane pass occupies residues 15-31 (LVLLGVICLALIGGALY). Over 32–49 (MQVVLGEAPCPLCILQRY) the chain is Periplasmic. The cysteines at positions 41 and 44 are disulfide-linked. Residues 50-65 (ALLFIAIFAFIAAAMP) form a helical membrane-spanning segment. Over 66–72 (GRKSLTF) the chain is Cytoplasmic. The helical transmembrane segment at 73-89 (FEVLVVLSAIGGIVAAG) threads the bilayer. Residues 90 to 144 (NHVYILANPMVSCGIDTLQPIVDDLPLAKLWPLAFQVDGFCSTPYPPILGLSLAQ) are Periplasmic-facing. The cysteines at positions 102 and 130 are disulfide-linked. Residues 145–163 (WALVAFVLTTVLVPLGIYR) traverse the membrane as a helical segment. Residues 164 to 168 (NRRRG) are Cytoplasmic-facing.

The protein belongs to the DsbB family.

Its subcellular location is the cell inner membrane. Its function is as follows. Required for disulfide bond formation in some periplasmic proteins. Acts by oxidizing the DsbA protein. This is Disulfide bond formation protein B 1 from Pseudomonas entomophila (strain L48).